The following is a 470-amino-acid chain: Type II NADH:quinone oxidoreductase NdhA (470 aa).

FAD is bound by residues 21–25 (GSGFG) and Val89. The active site involves Glu184. Residues Asp323 and 334–335 (AQ) each bind FAD. Residues 389 to 409 (FAGYFAWLAWLVLHLVYLVGY) form a helical membrane-spanning segment.

This sequence belongs to the NADH dehydrogenase family. Requires FAD as cofactor.

It is found in the cell inner membrane. The enzyme catalyses a quinone + NADH + H(+) = a quinol + NAD(+). The catalysed reaction is a menaquinone + NADH + H(+) = a menaquinol + NAD(+). Inhibited by phenothiazine analogs. Alternative, nonproton pumping NADH:quinone oxidoreductase that delivers electrons to the respiratory chain by oxidation of NADH and reduction of quinones. This Mycobacterium tuberculosis (strain ATCC 25618 / H37Rv) protein is Type II NADH:quinone oxidoreductase NdhA.